Here is a 499-residue protein sequence, read N- to C-terminus: Pyruvate kinase 2 (499 aa).

Residue R50 participates in substrate binding. Positions 52, 54, 84, and 85 each coordinate K(+). Residue 52-55 coordinates ATP; that stretch reads NFSH. R91 lines the ATP pocket. E241 provides a ligand contact to Mg(2+). Residues G264, D265, and T297 each contribute to the substrate site. D265 serves as a coordination point for Mg(2+).

Belongs to the pyruvate kinase family. In terms of assembly, homotetramer. Requires Mg(2+) as cofactor. K(+) serves as cofactor.

The catalysed reaction is pyruvate + ATP = phosphoenolpyruvate + ADP + H(+). It participates in carbohydrate degradation; glycolysis; pyruvate from D-glyceraldehyde 3-phosphate: step 5/5. Activated by fructose 2,6-bisphosphate, activated by the effector in a cooperative manner. The polypeptide is Pyruvate kinase 2 (PYK2) (Trypanosoma brucei brucei).